Reading from the N-terminus, the 189-residue chain is Crossover junction endodeoxyribonuclease RuvC (189 aa).

Residues Asp7, Glu68, and Asp141 contribute to the active site. Mg(2+)-binding residues include Asp7, Glu68, and Asp141.

The protein belongs to the RuvC family. As to quaternary structure, homodimer which binds Holliday junction (HJ) DNA. The HJ becomes 2-fold symmetrical on binding to RuvC with unstacked arms; it has a different conformation from HJ DNA in complex with RuvA. In the full resolvosome a probable DNA-RuvA(4)-RuvB(12)-RuvC(2) complex forms which resolves the HJ. The cofactor is Mg(2+).

It is found in the cytoplasm. The catalysed reaction is Endonucleolytic cleavage at a junction such as a reciprocal single-stranded crossover between two homologous DNA duplexes (Holliday junction).. Its function is as follows. The RuvA-RuvB-RuvC complex processes Holliday junction (HJ) DNA during genetic recombination and DNA repair. Endonuclease that resolves HJ intermediates. Cleaves cruciform DNA by making single-stranded nicks across the HJ at symmetrical positions within the homologous arms, yielding a 5'-phosphate and a 3'-hydroxyl group; requires a central core of homology in the junction. The consensus cleavage sequence is 5'-(A/T)TT(C/G)-3'. Cleavage occurs on the 3'-side of the TT dinucleotide at the point of strand exchange. HJ branch migration catalyzed by RuvA-RuvB allows RuvC to scan DNA until it finds its consensus sequence, where it cleaves and resolves the cruciform DNA. The chain is Crossover junction endodeoxyribonuclease RuvC from Chlorobium phaeovibrioides (strain DSM 265 / 1930) (Prosthecochloris vibrioformis (strain DSM 265)).